Reading from the N-terminus, the 115-residue chain is Beta-2-microglobulin (115 aa).

The N-terminal stretch at 1–16 (MKIALVLLSLLALTLA) is a signal peptide. In terms of domain architecture, Ig-like C1-type spans 22-113 (PPVVKVYTAE…GNPSKKYRLD (92 aa)).

This sequence belongs to the beta-2-microglobulin family. Heterodimer of an alpha chain and a beta chain. Beta-2-microglobulin is the beta-chain of major histocompatibility complex class I molecules.

It localises to the secreted. In terms of biological role, component of the class I major histocompatibility complex (MHC). Involved in the presentation of peptide antigens to the immune system. This chain is Beta-2-microglobulin (b2m), found in Xenopus laevis (African clawed frog).